A 279-amino-acid chain; its full sequence is Tryptophan synthase alpha chain (279 aa).

Active-site proton acceptor residues include glutamate 50 and aspartate 61.

It belongs to the TrpA family. In terms of assembly, tetramer of two alpha and two beta chains.

It carries out the reaction (1S,2R)-1-C-(indol-3-yl)glycerol 3-phosphate + L-serine = D-glyceraldehyde 3-phosphate + L-tryptophan + H2O. Its pathway is amino-acid biosynthesis; L-tryptophan biosynthesis; L-tryptophan from chorismate: step 5/5. In terms of biological role, the alpha subunit is responsible for the aldol cleavage of indoleglycerol phosphate to indole and glyceraldehyde 3-phosphate. This is Tryptophan synthase alpha chain from Rhizobium etli (strain ATCC 51251 / DSM 11541 / JCM 21823 / NBRC 15573 / CFN 42).